The primary structure comprises 569 residues: Laccase-6 (569 aa).

The N-terminal stretch at 1-29 (MTSSAVPSLFRLSFLLFTLQVMNIGRIGA) is a signal peptide. 2 consecutive Plastocyanin-like domains span residues 37-153 (KVQT…PKAS) and 163-315 (NEHT…YIGA). Residue N83 is glycosylated (N-linked (GlcNAc...) asparagine). Positions 87, 89, 132, and 134 each coordinate Cu cation. N-linked (GlcNAc...) asparagine glycans are attached at residues N208, N303, N319, N392, N438, and N444. A Plastocyanin-like 3 domain is found at 417 to 553 (DFPTTPEKAY…STMFIVKNGK (137 aa)). Residues H472, H475, H477, H532, C533, H534, H538, and M543 each coordinate Cu cation.

This sequence belongs to the multicopper oxidase family. The cofactor is Cu cation. In terms of tissue distribution, predominantly expressed in the inflorescence stem, but not in siliques.

Its subcellular location is the secreted. The protein resides in the extracellular space. The protein localises to the apoplast. The enzyme catalyses 4 hydroquinone + O2 = 4 benzosemiquinone + 2 H2O. In terms of biological role, lignin degradation and detoxification of lignin-derived products. This chain is Laccase-6 (LAC6), found in Arabidopsis thaliana (Mouse-ear cress).